Consider the following 1489-residue polypeptide: DNA-directed RNA polymerase subunit beta (1489 aa).

This sequence belongs to the RNA polymerase beta chain family. The RNAP catalytic core consists of 2 alpha, 1 beta, 1 beta' and 1 omega subunit. When a sigma factor is associated with the core the holoenzyme is formed, which can initiate transcription.

It catalyses the reaction RNA(n) + a ribonucleoside 5'-triphosphate = RNA(n+1) + diphosphate. In terms of biological role, DNA-dependent RNA polymerase catalyzes the transcription of DNA into RNA using the four ribonucleoside triphosphates as substrates. The chain is DNA-directed RNA polymerase subunit beta from Koribacter versatilis (strain Ellin345).